The chain runs to 313 residues: Tyrosine--tRNA ligase (313 aa).

Tyr32 contributes to the L-tyrosine binding site. The 'HIGH' region signature appears at 37 to 45 (PSGEIHLGH). The L-tyrosine site is built by Tyr152, Gln156, Asp159, and Gln174. Residues 208 to 212 (KMSSS) carry the 'KMSKS' region motif. ATP is bound at residue Ser211.

Belongs to the class-I aminoacyl-tRNA synthetase family. TyrS type 3 subfamily. In terms of assembly, homodimer.

Its subcellular location is the cytoplasm. It carries out the reaction tRNA(Tyr) + L-tyrosine + ATP = L-tyrosyl-tRNA(Tyr) + AMP + diphosphate + H(+). Functionally, catalyzes the attachment of tyrosine to tRNA(Tyr) in a two-step reaction: tyrosine is first activated by ATP to form Tyr-AMP and then transferred to the acceptor end of tRNA(Tyr). The sequence is that of Tyrosine--tRNA ligase from Methanospirillum hungatei JF-1 (strain ATCC 27890 / DSM 864 / NBRC 100397 / JF-1).